We begin with the raw amino-acid sequence, 1059 residues long: Potassium transporter TRK1 (1059 aa).

Residues 1 to 46 are Cytoplasmic-facing; it reads MLYRVSGFYKRHTRNFTNIDYGYYIRNFIHHIASKIYPYAKVVLPN. A helical transmembrane segment spans residues 47–67; the sequence is FRAAHYFYILTLVILGSILVY. Topologically, residues 68-73 are extracellular; that stretch reads PVKTCA. Residues 74–90 lie within the membrane without spanning it; sequence YIDVLFFTAGASTQAGL. The Extracellular segment spans residues 91 to 99; the sequence is NTVNVNDLS. A helical transmembrane segment spans residues 100-122; that stretch reads LYQQIVLYLLATLATPIFIHGSL. Over 123-625 the chain is Cytoplasmic; that stretch reads LFVRLYYFER…LGGIEYRAVK (503 aa). 3 disordered regions span residues 180 to 276, 304 to 350, and 404 to 574; these read REAE…IDPE, IGSP…EDED, and PWTS…SIEN. A compositionally biased stretch (low complexity) spans 186-203; it reads SSSSPQSSSSQTSQPVST. The span at 236–245 shows a compositional bias: basic and acidic residues; the sequence is EKIHFEEPQR. Positions 335–344 are enriched in polar residues; the sequence is PATNSVGTGN. Residues 412-423 show a composition bias toward low complexity; sequence TLSNSSKKGSLS. Composition is skewed to acidic residues over residues 428-449 and 469-490; these read DTED…SDIS and YEED…DDGE. Positions 524–536 are enriched in polar residues; sequence RSNTLDTPQQNTS. Positions 540–552 are enriched in basic residues; that stretch reads KIRKKAPKRKTPR. Over residues 556-566 the composition is skewed to polar residues; that stretch reads NASFNQHSNVS. A helical transmembrane segment spans residues 626–649; it reads LLIKIIVVYYVGFNIIPGVMLSIW. Over 650–668 the chain is Extracellular; that stretch reads IYCMPHYKNLMISSSISPA. Residues 669–685 lie within the membrane without spanning it; the sequence is WWAFFTSQSSFNDLGLT. The Extracellular segment spans residues 686–696; it reads LTSNSMMSFNQ. A helical transmembrane segment spans residues 697 to 713; it reads NAFVQILCSFLIVIGNT. Over 714 to 757 the chain is Cytoplasmic; it reads GFPILLRFIIWVMFKTARPLSLYKESLGFLLDHPRRCFTLLFPS. The chain crosses the membrane as a helical span at residues 758-781; that stretch reads VPTWWLFFILVVLNGFDLVIFCIL. The Extracellular portion of the chain corresponds to 782–796; sequence DLHDDTFKGVDMGYR. An intramembrane segment occupies 797-813; it reads VLNGLFQAFCTRTVGFS. Topologically, residues 814–820 are extracellular; it reads VMDLSQL. A helical transmembrane segment spans residues 821–844; it reads HAATQVSYLIMMYISVLPIAISVR. Topologically, residues 845-877 are cytoplasmic; sequence RTNVYEEQSLGVYAKENAEGVDESAPSNYVGSH. A helical transmembrane segment spans residues 878-899; that stretch reads LRNQLSYDLWYICLGLFIICIA. Residues 900 to 912 are Extracellular-facing; the sequence is EGKRLKEQDLRFS. An intramembrane segment occupies 913-931; it reads IFAVLFEIVSAYGTVGMSM. At 932-945 the chain is on the extracellular side; the sequence is GYPGVDCSLSGEFN. A helical membrane pass occupies residues 946 to 968; that stretch reads VISKLVIIAMMIRGRHRGLPYTI. The Cytoplasmic portion of the chain corresponds to 969–1059; it reads DRAIMLPNAA…RYVVRTVSEV (91 aa).

The protein belongs to the TrkH potassium transport family.

Its subcellular location is the cell membrane. The catalysed reaction is K(+)(in) = K(+)(out). It carries out the reaction chloride(in) = chloride(out). Its activity is regulated as follows. TRK1-mediated chloride conductance is blocked by 4,4'-diisothiocyanatostilbene-2,2'-disulfonic acid. Its function is as follows. Potassium transporter that mediates K(+) influx, as well as Cl(-) efflux as a secondary function. TRK1 is the major K(+) uptake transporter that regulates membrane potential and intracellular pH. The TRK1-mediated Cl(-) efflux should serve as a Cl(-) detoxification route and may play a role in sustaining C.albicans on mammalian epithelial surfaces, or in physiological saline solutions such as saliva. In terms of biological role, mediates candidacidal activities of cysteine-free peptides, but not of defensins. The hallmark of salivary gland-secreted histatin-5 (Hst 5) killing of C.albicans is the rapid efflux of cellular ATP and other small nucleotides and ions from the cell as well as concurrent intracellular uptake of propidium iodide (PI). TRK1 is the channel for Hst 5-induced killing and histatin-5 may directly or indirectly alter TRK1 function, allowing the efflux of larger anions, including ATP, and the influx of small cationic dyes, such as PI. In Candida albicans (Yeast), this protein is Potassium transporter TRK1.